A 206-amino-acid polypeptide reads, in one-letter code: Ribosomal RNA small subunit methyltransferase G (206 aa).

Residues Gly-71, Phe-76, 125 to 126 (IE), and Arg-139 contribute to the S-adenosyl-L-methionine site.

This sequence belongs to the methyltransferase superfamily. RNA methyltransferase RsmG family.

Its subcellular location is the cytoplasm. The catalysed reaction is guanosine(527) in 16S rRNA + S-adenosyl-L-methionine = N(7)-methylguanosine(527) in 16S rRNA + S-adenosyl-L-homocysteine. In terms of biological role, specifically methylates the N7 position of guanine in position 527 of 16S rRNA. The polypeptide is Ribosomal RNA small subunit methyltransferase G (Cereibacter sphaeroides (strain ATCC 17023 / DSM 158 / JCM 6121 / CCUG 31486 / LMG 2827 / NBRC 12203 / NCIMB 8253 / ATH 2.4.1.) (Rhodobacter sphaeroides)).